A 39-amino-acid chain; its full sequence is Contryphan-Cal3 (39 aa).

The first 20 residues, 1–20, serve as a signal peptide directing secretion; the sequence is MTRTAVLLLTLLFLVAMAAS. The cysteines at positions 29 and 35 are disulfide-linked.

As to expression, expressed by the venom duct.

It localises to the secreted. Probable neurotoxin. The sequence is that of Contryphan-Cal3 from Californiconus californicus (California cone).